The following is a 510-amino-acid chain: Pantetheinase (510 aa).

Positions 1–22 are cleaved as a signal peptide; that stretch reads MIMSQLLNYVAVLFFCVSRASS. The 277-residue stretch at 31–307 folds into the CN hydrolase domain; the sequence is YEHAVILPNA…GKLLLAQLDS (277 aa). N-linked (GlcNAc...) asparagine glycosylation occurs at asparagine 39. The active-site Proton acceptor is the glutamate 80. Asparagine 87 and asparagine 147 each carry an N-linked (GlcNAc...) asparagine glycan. Lysine 179 (proton donor) is an active-site residue. The N-linked (GlcNAc...) asparagine glycan is linked to asparagine 201. Cysteine 212 functions as the Nucleophile in the catalytic mechanism. Residues asparagine 316 and asparagine 354 are each glycosylated (N-linked (GlcNAc...) asparagine). Aspartate 492 carries GPI-anchor amidated aspartate lipidation. The propeptide at 493–510 is removed in mature form; it reads LTTQALRLNPKTDAWKSK. The O-linked (GalNAc...) threonine glycan is linked to threonine 504.

Belongs to the carbon-nitrogen hydrolase superfamily. BTD/VNN family. As to quaternary structure, monomer.

The protein resides in the cell membrane. The catalysed reaction is (R)-pantetheine + H2O = cysteamine + (R)-pantothenate. Its function is as follows. Amidohydrolase that hydrolyzes specifically one of the carboamide linkages in D-pantetheine thus recycling pantothenic acid (vitamin B5) and releasing cysteamine. The protein is Pantetheinase (VNN1) of Bos taurus (Bovine).